Reading from the N-terminus, the 99-residue chain is Co-chaperonin GroES (99 aa).

Belongs to the GroES chaperonin family. In terms of assembly, heptamer of 7 subunits arranged in a ring. Interacts with the chaperonin GroEL.

It localises to the cytoplasm. Its function is as follows. Together with the chaperonin GroEL, plays an essential role in assisting protein folding. The GroEL-GroES system forms a nano-cage that allows encapsulation of the non-native substrate proteins and provides a physical environment optimized to promote and accelerate protein folding. GroES binds to the apical surface of the GroEL ring, thereby capping the opening of the GroEL channel. The sequence is that of Co-chaperonin GroES from Rhodococcus erythropolis (strain PR4 / NBRC 100887).